A 433-amino-acid polypeptide reads, in one-letter code: MRNLLRGMLVVICCMAGIAAADEKNILVTSGSDRATPIAVVPFGWQGGSVLPDDMAQIIGDDLRNSGYYAPIPKQNMISLPTQASEVIFRDWKALGAQYVMVGSIVPAGGRLQVQYALFNVATEQQVLTGSVSGSVDQLRDMSHYISDQSFEKLTGIKGAFSTRLLYVTAERFSVNNTRYTLQRSDYDGARAVTLLQSREPILSPRFAPDGKRIAYVSFEQKRPRIFVQHIDTGRREQITNFEGLNGAPAWSPDGTRLAFVLSKDGNPDIYVMNMASRQISRVTSGPGINTEPFWGKDGSTIYFTSDRGGKPQVYKSNINGGGAERVTFIGNYNANPKLSADEKTLVMIHRQDGFTNFRVAAQDLQRGSVKILTDTNLDESATVAPNGTMVIYATRQQGRGVLMLVSINGRVRLPLPTAQGEVREPSWSPYLN.

The N-terminal stretch at 1–21 (MRNLLRGMLVVICCMAGIAAA) is a signal peptide.

This sequence belongs to the TolB family. As to quaternary structure, the Tol-Pal system is composed of five core proteins: the inner membrane proteins TolA, TolQ and TolR, the periplasmic protein TolB and the outer membrane protein Pal. They form a network linking the inner and outer membranes and the peptidoglycan layer.

It is found in the periplasm. In terms of biological role, part of the Tol-Pal system, which plays a role in outer membrane invagination during cell division and is important for maintaining outer membrane integrity. This Pseudomonas fluorescens (strain ATCC BAA-477 / NRRL B-23932 / Pf-5) protein is Tol-Pal system protein TolB.